The primary structure comprises 382 residues: 8-amino-7-oxononanoate synthase (382 aa).

Arg-26 contacts substrate. 104-105 serves as a coordination point for pyridoxal 5'-phosphate; the sequence is GY. A substrate-binding site is contributed by His-129. Residues Ser-175, 200–203, and 232–235 contribute to the pyridoxal 5'-phosphate site; these read DEAH and TLSK. An N6-(pyridoxal phosphate)lysine modification is found at Lys-235. Thr-345 is a substrate binding site.

This sequence belongs to the class-II pyridoxal-phosphate-dependent aminotransferase family. BioF subfamily. In terms of assembly, homodimer. Requires pyridoxal 5'-phosphate as cofactor.

The catalysed reaction is 6-carboxyhexanoyl-[ACP] + L-alanine + H(+) = (8S)-8-amino-7-oxononanoate + holo-[ACP] + CO2. The protein operates within cofactor biosynthesis; biotin biosynthesis. Catalyzes the decarboxylative condensation of pimeloyl-[acyl-carrier protein] and L-alanine to produce 8-amino-7-oxononanoate (AON), [acyl-carrier protein], and carbon dioxide. The polypeptide is 8-amino-7-oxononanoate synthase (Mycobacterium sp. (strain JLS)).